Consider the following 147-residue polypeptide: Hemoglobin subunit beta (147 aa).

An N-acetylvaline modification is found at Val-2. Residues 3–147 (HLTGEEKAAV…VANALAHKYH (145 aa)) enclose the Globin domain. The residue at position 13 (Thr-13) is a Phosphothreonine. At Ser-45 the chain carries Phosphoserine. Lys-60 carries the N6-acetyllysine modification. His-64 is a binding site for heme b. An N6-acetyllysine modification is found at Lys-83. Position 93 (His-93) interacts with heme b. Cys-94 is modified (S-nitrosocysteine). Lys-145 carries the N6-acetyllysine modification.

It belongs to the globin family. Heterotetramer of two alpha chains and two beta chains. In terms of tissue distribution, red blood cells.

Involved in oxygen transport from the lung to the various peripheral tissues. In Lagothrix lagotricha (Brown woolly monkey), this protein is Hemoglobin subunit beta (HBB).